The following is a 202-amino-acid chain: Large ribosomal subunit protein bL25 (202 aa).

This sequence belongs to the bacterial ribosomal protein bL25 family. CTC subfamily. As to quaternary structure, part of the 50S ribosomal subunit; part of the 5S rRNA/L5/L18/L25 subcomplex. Contacts the 5S rRNA. Binds to the 5S rRNA independently of L5 and L18.

In terms of biological role, this is one of the proteins that binds to the 5S RNA in the ribosome where it forms part of the central protuberance. The chain is Large ribosomal subunit protein bL25 from Chlorobium luteolum (strain DSM 273 / BCRC 81028 / 2530) (Pelodictyon luteolum).